Reading from the N-terminus, the 57-residue chain is Small ribosomal subunit protein bS21 (57 aa).

Basic and acidic residues predominate over residues Val-32–Ser-42. The interval Val-32–Arg-57 is disordered. Over residues Gln-43–Arg-57 the composition is skewed to basic residues.

The protein belongs to the bacterial ribosomal protein bS21 family.

In Synechococcus elongatus (strain ATCC 33912 / PCC 7942 / FACHB-805) (Anacystis nidulans R2), this protein is Small ribosomal subunit protein bS21.